Consider the following 647-residue polypeptide: Chaperone protein DnaK (647 aa).

Position 198 is a phosphothreonine; by autocatalysis (T198). Residues 606 to 634 (GASAEGMDPNQFQQGADNAGESNQADDDV) are disordered. Over residues 615 to 628 (NQFQQGADNAGESN) the composition is skewed to polar residues.

The protein belongs to the heat shock protein 70 family.

Functionally, acts as a chaperone. The polypeptide is Chaperone protein DnaK (Psychrobacter cryohalolentis (strain ATCC BAA-1226 / DSM 17306 / VKM B-2378 / K5)).